Reading from the N-terminus, the 88-residue chain is Small ribosomal subunit protein bS20 (88 aa).

This sequence belongs to the bacterial ribosomal protein bS20 family.

In terms of biological role, binds directly to 16S ribosomal RNA. This Blochmanniella floridana protein is Small ribosomal subunit protein bS20.